A 129-amino-acid chain; its full sequence is uncharacterized protein (129 aa).

The helical transmembrane segment at 33-50 (MGGNVMWFIALLFALLIA) threads the bilayer.

It localises to the membrane. This is an uncharacterized protein from Saccharomyces cerevisiae (strain ATCC 204508 / S288c) (Baker's yeast).